The chain runs to 133 residues: Minor spike protein H (133 aa).

This sequence belongs to the microviridae H protein family.

Its subcellular location is the virion. In terms of biological role, probably triggers with protein G the injection of the phage DNA into the host upon conformational changes induced by virus-host receptor interaction. The sequence is that of Minor spike protein H from Spiroplasma virus 4 (SpV4).